The following is a 933-amino-acid chain: Progesterone receptor (933 aa).

The interval 1 to 164 is AF3; mediates transcriptional activation; it reads MTELKAKGPR…PATQGVLSPL (164 aa). The disordered stretch occupies residues 1-256; that stretch reads MTELKAKGPR…AAAGGGAAAV (256 aa). A modulating, Pro-Rich region spans residues 1–566; it reads MTELKAKGPR…YSFESLPQKI (566 aa). Phosphoserine is present on Ser20. The short motif at 55 to 59 is the LXXL motif 1 element; sequence LDGLL. Position 81 is a phosphoserine (Ser81). Positions 115-119 match the LXXL motif 2 motif; the sequence is LDTLL. A phosphoserine mark is found at Ser130 and Ser162. The tract at residues 165–305 is mediates transcriptional transrepression; it reads MSRSGCKAGD…LATTMMDFIH (141 aa). The Nuclear localization signal signature appears at 183-187; it reads KVLPR. 2 positions are modified to phosphoserine: Ser190 and Ser213. The span at 220-231 shows a compositional bias: acidic residues; sequence EVEEEDGSESEE. Residues 232–246 show a composition bias toward low complexity; it reads SAGPLLKGKPRALGG. Ser294 is modified (phosphoserine; by MAPK1). Residues 331–378 are disordered; the sequence is GGAGAASAFAPPRSSPSASSTPVAVGDFPDCAYPPDAEPKDDAYPLYS. The span at 335–350 shows a compositional bias: low complexity; the sequence is AASAFAPPRSSPSASS. A Phosphoserine; by MAPK modification is found at Ser345. Lys388 participates in a covalent cross-link: Glycyl lysine isopeptide (Lys-Gly) (interchain with G-Cter in SUMO); alternate. Lys388 participates in a covalent cross-link: Glycyl lysine isopeptide (Lys-Gly) (interchain with G-Cter in ubiquitin); alternate. Phosphoserine; by CDK2 is present on Ser400. The interval 415 to 452 is disordered; sequence PDFPLGPPPPLPPRAPPSRPGEAAVTAAPASASVSSAS. The segment covering 418 to 433 has biased composition (pro residues); the sequence is PLGPPPPLPPRAPPSR. Residues 434–452 show a composition bias toward low complexity; sequence PGEAAVTAAPASASVSSAS. The interval 456-546 is AF1; mediates transcriptional activation; the sequence is STLECILYKA…VYPPYLNYLR (91 aa). Lys531 is covalently cross-linked (Glycyl lysine isopeptide (Lys-Gly) (interchain with G-Cter in SUMO)). NR C4-type zinc fingers lie at residues 567-587 and 603-627; these read CLIC…CGSC and CAGR…LRKC. Positions 567–639 form a DNA-binding region, nuclear receptor; that stretch reads CLICGDEASG…AGMVLGGRKF (73 aa). Ser676 is subject to Phosphoserine. Positions 679 to 913 constitute an NR LBD domain; that stretch reads QDIQLIPPLI…EFPEMMSEVI (235 aa). The tract at residues 687–933 is AF2; mediates transcriptional activation; sequence LINLLMSIEP…MVKPLLFHKK (247 aa). Arg766 serves as a coordination point for progesterone.

This sequence belongs to the nuclear hormone receptor family. In terms of assembly, interacts with SMARD1 and UNC45A. Interacts with CUEDC2; the interaction promotes ubiquitination, decreases sumoylation, and represses transcriptional activity. Interacts with PIAS3; the interaction promotes sumoylation of PR in a hormone-dependent manner, inhibits DNA-binding, and alters nuclear export. Interacts with SP1; the interaction requires ligand-induced phosphorylation on Ser-345 by ERK1/2-MAPK. Interacts with PRMT2. Interacts with NCOA2 and NCOA1. Interacts with KLF9. Interacts with GTF2B. Post-translationally, phosphorylated on multiple serine sites. Several of these sites are hormone-dependent. Phosphorylation on Ser-294 is highly hormone-dependent and modulates ubiquitination and sumoylation on Lys-388. Phosphorylation on Ser-102 and Ser-345 also requires induction by hormone. Basal phosphorylation on Ser-81, Ser-162, Ser-190 and Ser-400 is increased in response to progesterone and can be phosphorylated in vitro by the CDK2-A1 complex. Increased levels of phosphorylation on Ser-400 also in the presence of EGF, heregulin, IGF, PMA and FBS. Phosphorylation at this site by CDK2 is ligand-independent, and increases nuclear translocation and transcriptional activity. Phosphorylation at Ser-162 and Ser-294, but not at Ser-190, is impaired during the G(2)/M phase of the cell cycle. Phosphorylation on Ser-345 by ERK1/2 MAPK is required for interaction with SP1. In terms of processing, sumoylation is hormone-dependent and represses transcriptional activity. Sumoylation on all three sites is enhanced by PIAS3. Desumoylated by SENP1. Sumoylation on Lys-388, the main site of sumoylation, is repressed by ubiquitination on the same site, and modulated by phosphorylation at Ser-294. Ubiquitination is hormone-dependent and represses sumoylation on the same site. Promoted by MAPK-mediated phosphorylation on Ser-294. Ubiquitinated by UBR5, leading to its degradation: UBR5 specifically recognizes and binds ligand-bound PGR when it is not associated with coactivators (NCOAs). In presence of NCOAs, the UBR5-degron is not accessible, preventing its ubiquitination and degradation. Post-translationally, palmitoylated by ZDHHC7 and ZDHHC21. Palmitoylation is required for plasma membrane targeting and for rapid intracellular signaling via ERK and AKT kinases and cAMP generation.

The protein localises to the nucleus. It is found in the cytoplasm. The steroid hormones and their receptors are involved in the regulation of eukaryotic gene expression and affect cellular proliferation and differentiation in target tissues. Transcriptional activator of several progesteron-dependent promoters in a variety of cell types. Involved in activation of SRC-dependent MAPK signaling on hormone stimulation. The sequence is that of Progesterone receptor (PGR) from Pan paniscus (Pygmy chimpanzee).